A 102-amino-acid chain; its full sequence is Co-chaperonin GroES (102 aa).

The protein belongs to the GroES chaperonin family. As to quaternary structure, heptamer of 7 subunits arranged in a ring. Interacts with the chaperonin GroEL.

The protein localises to the cytoplasm. Together with the chaperonin GroEL, plays an essential role in assisting protein folding. The GroEL-GroES system forms a nano-cage that allows encapsulation of the non-native substrate proteins and provides a physical environment optimized to promote and accelerate protein folding. GroES binds to the apical surface of the GroEL ring, thereby capping the opening of the GroEL channel. The chain is Co-chaperonin GroES from Streptomyces griseus subsp. griseus (strain JCM 4626 / CBS 651.72 / NBRC 13350 / KCC S-0626 / ISP 5235).